The sequence spans 238 residues: U2 small nuclear ribonucleoprotein A' (238 aa).

3 LRR repeats span residues Pro53–Asp74, Asp75–Pro95, and Asn97–Arg118. The region spanning Asn132–Phe170 is the LRRCT domain. A disordered region spans residues Ala167–Asn189.

It belongs to the U2 small nuclear ribonucleoprotein A family. In terms of assembly, belongs to the CWC complex (or CEF1-associated complex), a spliceosome sub-complex reminiscent of a late-stage spliceosome composed of the U2, U5 and U6 snRNAs and at least BUD13, BUD31, BRR2, CDC40, CEF1, CLF1, CUS1, CWC2, CWC15, CWC21, CWC22, CWC23, CWC24, CWC25, CWC27, ECM2, HSH155, IST3, ISY1, LEA1, MSL1, NTC20, PRP8, PRP9, PRP11, PRP19, PRP21, PRP22, PRP45, PRP46, SLU7, SMB1, SMD1, SMD2, SMD3, SMX2, SMX3, SNT309, SNU114, SPP2, SYF1, SYF2, RSE1 and YJU2. Interacts with MSL1.

It is found in the nucleus. Its function is as follows. Involved in pre-mRNA splicing. Associates to U2 snRNA in a MSL1 dependent manner and is required for normal accumulation of U2 snRNA. Required for the spliceosome assembly and the efficient addition of U2 snRNP onto the pre-mRNA. This is U2 small nuclear ribonucleoprotein A' (LEA1) from Saccharomyces cerevisiae (strain ATCC 204508 / S288c) (Baker's yeast).